We begin with the raw amino-acid sequence, 173 residues long: MKKKEIVDDVTMKRAITRITYEIIERNKSLDNLVLAGIKTRGVYLARRIQERLKQLEGIELPIGELDIKPFRDDMKVEEDTTDMPFDINGKDVILVDDVLYTGRTIRAAIDNLVSLGRPARVGLAVLVDRGHRELPIRADYVGKNIPTSSIEEIVVEVIEVDGKDCVSIVDPS.

The short motif at 93–105 is the PRPP-binding element; the sequence is VILVDDVLYTGRT.

This sequence belongs to the purine/pyrimidine phosphoribosyltransferase family. PyrR subfamily. In terms of assembly, homodimer and homohexamer; in equilibrium.

The enzyme catalyses UMP + diphosphate = 5-phospho-alpha-D-ribose 1-diphosphate + uracil. Regulates transcriptional attenuation of the pyrimidine nucleotide (pyr) operon by binding in a uridine-dependent manner to specific sites on pyr mRNA. This disrupts an antiterminator hairpin in the RNA and favors formation of a downstream transcription terminator, leading to a reduced expression of downstream genes. Functionally, also displays a weak uracil phosphoribosyltransferase activity which is not physiologically significant. This Streptococcus uberis (strain ATCC BAA-854 / 0140J) protein is Bifunctional protein PyrR.